Consider the following 413-residue polypeptide: Putative competence-damage inducible protein (413 aa).

Belongs to the CinA family.

In Alkaliphilus oremlandii (strain OhILAs) (Clostridium oremlandii (strain OhILAs)), this protein is Putative competence-damage inducible protein.